Here is a 144-residue protein sequence, read N- to C-terminus: Transcriptional regulator SlyA (144 aa).

The 134-residue stretch at 2-135 (ESSLGSDLAR…LNNIIAKLER (134 aa)) folds into the HTH marR-type domain. The segment at residues 49-72 (QIQLAKAIGIEQPSLVRTLDQLES) is a DNA-binding region (H-T-H motif).

This sequence belongs to the SlyA family. As to quaternary structure, homodimer.

Transcription regulator that can specifically activate or repress expression of target genes. This is Transcriptional regulator SlyA from Blochmanniella floridana.